We begin with the raw amino-acid sequence, 485 residues long: E3 ubiquitin-protein ligase TRIM58 (485 aa).

The RING-type zinc-finger motif lies at 15–59 (CSVCLDFLQEPISVDCGHSFCLRCISEFCEKSDSAQGVYACPQCR). A B box-type zinc finger spans residues 90–131 (AGSRQCARHGEDLSHFCEEDQTMLCWVCDTSPEHRSHRTETL). Zn(2+) contacts are provided by Cys-95, His-98, Cys-117, and His-123. Residues 192–241 (LAQEEQLQLRRLEEEERATLQRLRDSRNRLAQQNKALKELAEELEERSQR) are a coiled coil. Positions 271-466 (DLKTVCRIPG…LPPMTEAAPG (196 aa)) constitute a B30.2/SPRY domain.

The protein belongs to the TRIM/RBCC family. Expressed in erythroblasts.

It catalyses the reaction S-ubiquitinyl-[E2 ubiquitin-conjugating enzyme]-L-cysteine + [acceptor protein]-L-lysine = [E2 ubiquitin-conjugating enzyme]-L-cysteine + N(6)-ubiquitinyl-[acceptor protein]-L-lysine.. The protein operates within protein modification; protein ubiquitination. In terms of biological role, E3 ubiquitin ligase induced during late erythropoiesis. Directly binds and ubiquitinates the intermediate chain of the microtubule motor dynein (DYNC1LI1/DYNC1LI2), stimulating the degradation of the dynein holoprotein complex. May participate in the erythroblast enucleation process through regulation of nuclear polarization. This chain is E3 ubiquitin-protein ligase TRIM58 (Trim58), found in Mus musculus (Mouse).